We begin with the raw amino-acid sequence, 301 residues long: MDNVENCAADVFERQAAFLSSALPYMQKYENETVVVKYGGHAMGDSTLGRAFARDIALLKQSGINPVVVHGGGPQIAEILMKMGIESRFENGLRVTDERIVEVVEMVLAGSINKEIVALINAEGEWAIGLCGKDGNMVFAEKAYKTVIDPDSHIERVLDLGFVGEPVEVDRTLLDLLACSEMIPVLAPVAPGHDGKTYNINADIFAGAIAGALEAKRLLFLTDVPGVLNKKGKLLKELTISEVENLIKNGTISGGMIPKVETCMKALQNGVEGVVILNGKTPHSVLLELFTEQGAGTLIVS.

Substrate-binding positions include Gly-72–Gly-73, Arg-94, and Asn-199.

It belongs to the acetylglutamate kinase family. ArgB subfamily.

The protein localises to the cytoplasm. It carries out the reaction N-acetyl-L-glutamate + ATP = N-acetyl-L-glutamyl 5-phosphate + ADP. It functions in the pathway amino-acid biosynthesis; L-arginine biosynthesis; N(2)-acetyl-L-ornithine from L-glutamate: step 2/4. In terms of biological role, catalyzes the ATP-dependent phosphorylation of N-acetyl-L-glutamate. The chain is Acetylglutamate kinase from Bartonella quintana (strain Toulouse) (Rochalimaea quintana).